The following is a 231-amino-acid chain: Lipoprotein-releasing system ATP-binding protein LolD (231 aa).

An ABC transporter domain is found at 6–230 (LSCKNVSKKY…DGELELVINS (225 aa)). Residue 42-49 (GLSGSGKT) coordinates ATP.

This sequence belongs to the ABC transporter superfamily. Lipoprotein translocase (TC 3.A.1.125) family. In terms of assembly, the complex is composed of two ATP-binding proteins (LolD) and two transmembrane proteins (LolC and LolE).

The protein resides in the cell inner membrane. Part of the ABC transporter complex LolCDE involved in the translocation of mature outer membrane-directed lipoproteins, from the inner membrane to the periplasmic chaperone, LolA. Responsible for the formation of the LolA-lipoprotein complex in an ATP-dependent manner. In Francisella tularensis subsp. holarctica (strain OSU18), this protein is Lipoprotein-releasing system ATP-binding protein LolD.